Here is a 690-residue protein sequence, read N- to C-terminus: MTKINKLEYIRNIGICAHIDAGKTTTTERILYYTGKSHKIGEVHEGGATMDWMEQEQERGITITSAATTCRWQDKIINIIDTPGHVDFTIEVERSLRVLDGAVAVFDGVAGVEPQSETVWRQADKYNVPRMCFINKMDRMGADFYRCVEMIKDRLGAKPLVIQLPVGIEENFKGIIDLVKMKAVIWKDESLGAEYFAEDIPADMKYKAEEYRTKLLDMVVELDDHIMEKYLSGEEVTEEEIERLIRNGTISAAFYPVLCGSAFKNKGVQPLLDAVVGFLPSPIDIGIVKGIEVSTGEEKDFPISVTEPFAALAFKIMNDPFVGSLTFIRIYSGKITSGSTVINTVKNKREKIGRMLLMHANNREDVKEASAGDIVALAGLKDTTTGDTLSDIDKQVILERMEFPEPVIELAVEPKSTADQEKMGLALSRLAAEDPSFRVSMDHETGQTVIKGMGELHLEIIIDRMRREFKVEANIGAPQVAYRETITKICEIDYTHKKQSGGAGQFARVKIIFEPLNPGEGFVFESKIVGGAVPKEYIPGIEKGLNNIRETGVIAGYPMIDFKATLVDGAFHDVDSSVLAFEIAAKAAFREGMLKGNPKLLEPIMKVEVITPDEYMGDIIGDLNSRRGQIQSMDPRANAQVVTSNVPLAEMFGYVNTLRSLSQGRAQFSMIFSHYDQVPSQIADVIKAKK.

The 276-residue stretch at Glu-8–Ile-283 folds into the tr-type G domain. Residues Ala-17–Thr-24, Asp-81–His-85, and Asn-135–Asp-138 contribute to the GTP site.

The protein belongs to the TRAFAC class translation factor GTPase superfamily. Classic translation factor GTPase family. EF-G/EF-2 subfamily.

Its subcellular location is the cytoplasm. Its function is as follows. Catalyzes the GTP-dependent ribosomal translocation step during translation elongation. During this step, the ribosome changes from the pre-translocational (PRE) to the post-translocational (POST) state as the newly formed A-site-bound peptidyl-tRNA and P-site-bound deacylated tRNA move to the P and E sites, respectively. Catalyzes the coordinated movement of the two tRNA molecules, the mRNA and conformational changes in the ribosome. The protein is Elongation factor G of Rickettsia canadensis (strain McKiel).